The sequence spans 148 residues: MLSRAIFRNPVINRTLLRARPGAYHATRLTKNTFIQSRKYSDAHDEETFEEFTARYEKEFDEAYDLFEVQRVLNNCFSYDLVPAPAVIEKALRAARRVNDLPTAIRVFEALKYKVENEDQYKAYLDELKDVRQELGVPLKEELFPSSS.

The N-terminal 40 residues, 1–40, are a transit peptide targeting the mitochondrion; sequence MLSRAIFRNPVINRTLLRARPGAYHATRLTKNTFIQSRKY.

This sequence belongs to the cytochrome c oxidase subunit 5A family. As to quaternary structure, component of the cytochrome c oxidase (complex IV, CIV), a multisubunit enzyme composed of 12 subunits. The complex is composed of a catalytic core of 3 subunits COX1, COX2 and COX3, encoded in the mitochondrial DNA, and 9 supernumerary subunits COX4, COX5A (or COX5B), COX6, COX7, COX8, COX9, COX12, COX13 and COX26, which are encoded in the nuclear genome. The complex exists as a monomer or a dimer and forms supercomplexes (SCs) in the inner mitochondrial membrane with a dimer of ubiquinol-cytochrome c oxidoreductase (cytochrome b-c1 complex, complex III, CIII), resulting in 2 different assemblies (supercomplexes III(2)IV and III(2)IV(2)). COX26 interacts with COX1, COX2, COX6 and COX9.

The protein localises to the mitochondrion inner membrane. It participates in energy metabolism; oxidative phosphorylation. Functionally, component of the cytochrome c oxidase, the last enzyme in the mitochondrial electron transport chain which drives oxidative phosphorylation. The respiratory chain contains 3 multisubunit complexes succinate dehydrogenase (complex II, CII), ubiquinol-cytochrome c oxidoreductase (cytochrome b-c1 complex, complex III, CIII) and cytochrome c oxidase (complex IV, CIV), that cooperate to transfer electrons derived from NADH and succinate to molecular oxygen, creating an electrochemical gradient over the inner membrane that drives transmembrane transport and the ATP synthase. Cytochrome c oxidase is the component of the respiratory chain that catalyzes the reduction of oxygen to water. Electrons originating from reduced cytochrome c in the intermembrane space (IMS) are transferred via the dinuclear copper A center (CU(A)) of COX2 and heme A of COX1 to the active site in COX1, a binuclear center (BNC) formed by heme A3 and copper B (CU(B)). The BNC reduces molecular oxygen to 2 water molecules using 4 electrons from cytochrome c in the IMS and 4 protons from the mitochondrial matrix. COX6 may stabilize the region of CIV at the interface with CIII, supporting a role in formation or stability of the CIII(2)IV(2) SC. This chain is Cytochrome c oxidase subunit 6, mitochondrial (COX6), found in Saccharomyces cerevisiae (strain ATCC 204508 / S288c) (Baker's yeast).